Here is a 336-residue protein sequence, read N- to C-terminus: tRNA N6-adenosine threonylcarbamoyltransferase (336 aa).

Fe cation contacts are provided by histidine 111 and histidine 115. Residues leucine 133–glycine 137, aspartate 166, glycine 179, and asparagine 276 each bind substrate. Residue aspartate 301 coordinates Fe cation.

This sequence belongs to the KAE1 / TsaD family. Fe(2+) serves as cofactor.

It localises to the cytoplasm. The enzyme catalyses L-threonylcarbamoyladenylate + adenosine(37) in tRNA = N(6)-L-threonylcarbamoyladenosine(37) in tRNA + AMP + H(+). Required for the formation of a threonylcarbamoyl group on adenosine at position 37 (t(6)A37) in tRNAs that read codons beginning with adenine. Is involved in the transfer of the threonylcarbamoyl moiety of threonylcarbamoyl-AMP (TC-AMP) to the N6 group of A37, together with TsaE and TsaB. TsaD likely plays a direct catalytic role in this reaction. In Wolbachia pipientis subsp. Culex pipiens (strain wPip), this protein is tRNA N6-adenosine threonylcarbamoyltransferase.